The sequence spans 90 residues: Acylphosphatase (90 aa).

The 87-residue stretch at 4–90 folds into the Acylphosphatase-like domain; the sequence is RWRFLIEGSV…TGNDWFDVRT (87 aa). Active-site residues include Arg-19 and Asn-37.

It belongs to the acylphosphatase family.

It catalyses the reaction an acyl phosphate + H2O = a carboxylate + phosphate + H(+). The polypeptide is Acylphosphatase (acyP) (Synechococcus sp. (strain CC9311)).